The primary structure comprises 442 residues: tRNA(Ile)-lysidine synthase (442 aa).

28–33 (SGGLDS) is an ATP binding site.

The protein belongs to the tRNA(Ile)-lysidine synthase family.

It is found in the cytoplasm. The catalysed reaction is cytidine(34) in tRNA(Ile2) + L-lysine + ATP = lysidine(34) in tRNA(Ile2) + AMP + diphosphate + H(+). In terms of biological role, ligates lysine onto the cytidine present at position 34 of the AUA codon-specific tRNA(Ile) that contains the anticodon CAU, in an ATP-dependent manner. Cytidine is converted to lysidine, thus changing the amino acid specificity of the tRNA from methionine to isoleucine. The chain is tRNA(Ile)-lysidine synthase from Pseudomonas aeruginosa (strain ATCC 15692 / DSM 22644 / CIP 104116 / JCM 14847 / LMG 12228 / 1C / PRS 101 / PAO1).